Here is a 198-residue protein sequence, read N- to C-terminus: CXXC-type zinc finger protein 4 (198 aa).

A disordered region spans residues 114–134; the sequence is NHSSSSSSSSGGAGGANPAKK. The segment at 132-173 adopts a CXXC-type zinc-finger fold; the sequence is AKKKRKRCGVCVPCKRLINCGVCSSCRNRKTGHQICKFRKCE. The Zn(2+) site is built by C139, C142, C145, C151, C154, and C157. Positions 161-166 are interaction with DVL1; it reads KTGHQI. C167 and C172 together coordinate Zn(2+).

Interacts with the PDZ domain of DVL1.

The protein resides in the cytoplasm. Functionally, acts as a negative regulator of the Wnt signaling pathway via its interaction with DVL1. Binds preferentially to DNA containing cytidine-phosphate-guanosine (CpG) dinucleotides over CpH (H=A, T, and C), hemimethylated-CpG and hemimethylated-hydroxymethyl-CpG. The protein is CXXC-type zinc finger protein 4 (CXXC4) of Homo sapiens (Human).